The primary structure comprises 1066 residues: Allene oxide synthase-lipoxygenase protein (1066 aa).

The tract at residues 1 to 371 is allene oxide synthase; sequence MTWKNFGFEI…LKIGSLVPAG (371 aa). Y353 contacts heme. The segment at 372-1066 is arachidonate 8-lipoxygenase; that stretch reads QNAIYNVEVE…PERIPNGTAI (695 aa). The PLAT domain occupies 374–490; the sequence is AIYNVEVETG…KDMVLFPGEA (117 aa). Ca(2+) is bound by residues H387, G389, T390, D391, N416, D417, E419, D452, and D454. The Lipoxygenase domain occupies 491-1066; it reads TLPFNEVPAI…PERIPNGTAI (576 aa). Fe cation contacts are provided by H757, H762, H943, N947, and I1066.

This sequence in the C-terminal section; belongs to the lipoxygenase family. As to quaternary structure, dimer. Ca(2+) is required as a cofactor. Fe cation serves as cofactor. The cofactor is heme.

It localises to the cytoplasm. The protein localises to the membrane. It catalyses the reaction (5Z,8Z,11Z,14Z)-eicosatetraenoate + O2 = (8R)-hydroperoxy-(5Z,9E,11Z,14Z)-eicosatetraenoate. The catalysed reaction is (8R)-hydroperoxy-(5Z,9E,11Z,14Z)-eicosatetraenoate = 8,9-epoxy-(5Z,9E,11Z,14Z)-eicosatetraenoate + H2O. The enzyme catalyses (5Z,8Z,11Z,14Z,17Z)-eicosapentaenoate + O2 = (8R)-hydroperoxy-(5Z,9E,11Z,14Z,17Z)-eicosapentaenoate. It carries out the reaction (4Z,7Z,10Z,13Z,16Z,19Z)-docosahexaenoate + O2 = 10-hydroperoxy-(4Z,7Z,11E,13Z,16Z,19Z)-docosahexaenoate. It catalyses the reaction (8Z,11Z,14Z)-eicosatrienoate + O2 = (8R)-hydroperoxy-(9E,11Z,14Z)-eicosatrienoate. The catalysed reaction is (8Z,11Z,14Z)-eicosatrienoate + O2 = 10-hydroperoxy-(8Z,11Z,14Z)-eicosatrienoate. The enzyme catalyses (8Z,11Z,14Z)-eicosatrienoate + O2 = 11-hydroperoxy-(8Z,12E,14Z)-eicosatrienoate. The protein operates within lipid metabolism; arachidonate metabolism. Its pathway is lipid metabolism; fatty acid metabolism. Its activity is regulated as follows. Lipoxygenase activity is stimulated by calcium, sodium, lithium and potassium ions. Calcium binding promotes interaction with membranes and thus facilitates access to substrates. In terms of biological role, bifunctional enzyme which is responsible for allene oxide biosynthesis via a two-step reaction; first the lipoxygenase reaction that converts polyunsaturated fatty acids such as arachidonate ((5Z,8Z,11Z,14Z)-eicosatetraenoate) into a (8R)-hydroperoxide intermediate ((8R)-hydroperoxy-(5Z,9E,11Z,14Z)-eicosatetraenoate) followed by the allene oxide synthase reaction that converts the hydroperoxide intermediate ((8R)-hydroperoxy-(5Z,9E,11Z,14Z)-eicosatetraenoate) into the allene oxide (8,9-epoxy-(5Z,9E,11Z,14Z)-eicosatetraenoate). Shows preference for C20 or C22 highly polyunsaturated fatty acids and no activity with C18 fatty acids in vitro. Fatty acid allene oxides are intermediates in the formation of cyclopentenones or hydrolytic products in marine systems, most notably the prostanoid-related clavulones. The polypeptide is Allene oxide synthase-lipoxygenase protein (Plexaura homomalla (Black sea rod)).